The primary structure comprises 254 residues: 2-dehydro-3-deoxy-D-gluconate 5-dehydrogenase (254 aa).

Tyrosine 159 functions as the Proton acceptor in the catalytic mechanism.

Belongs to the short-chain dehydrogenases/reductases (SDR) family.

It carries out the reaction 2-dehydro-3-deoxy-D-gluconate + NAD(+) = 3-deoxy-D-glycero-2,5-hexodiulosonate + NADH + H(+). In terms of biological role, involved in the degradation of 3,6-anhydro-L-galactose, which is the major monomeric sugar of red macroalgae. Catalyzes the fourth step of the pathway, the reduction of 3-deoxy-D-glycero-2,5-hexodiulosonate (L-DDGal) to 2-dehydro-3-deoxy-D-gluconate (KDG). This Pseudoalteromonas atlantica (strain T6c / ATCC BAA-1087) protein is 2-dehydro-3-deoxy-D-gluconate 5-dehydrogenase.